A 236-amino-acid chain; its full sequence is Biosynthetic peptidoglycan transglycosylase (236 aa).

A helical membrane pass occupies residues 12-31 (ALLWFAASSIVLVLVFRWVP).

This sequence belongs to the glycosyltransferase 51 family.

It localises to the cell inner membrane. It catalyses the reaction [GlcNAc-(1-&gt;4)-Mur2Ac(oyl-L-Ala-gamma-D-Glu-L-Lys-D-Ala-D-Ala)](n)-di-trans,octa-cis-undecaprenyl diphosphate + beta-D-GlcNAc-(1-&gt;4)-Mur2Ac(oyl-L-Ala-gamma-D-Glu-L-Lys-D-Ala-D-Ala)-di-trans,octa-cis-undecaprenyl diphosphate = [GlcNAc-(1-&gt;4)-Mur2Ac(oyl-L-Ala-gamma-D-Glu-L-Lys-D-Ala-D-Ala)](n+1)-di-trans,octa-cis-undecaprenyl diphosphate + di-trans,octa-cis-undecaprenyl diphosphate + H(+). The protein operates within cell wall biogenesis; peptidoglycan biosynthesis. Peptidoglycan polymerase that catalyzes glycan chain elongation from lipid-linked precursors. This is Biosynthetic peptidoglycan transglycosylase from Pseudomonas putida (strain GB-1).